Reading from the N-terminus, the 445-residue chain is Phosphoglucosamine mutase 1 (445 aa).

The active-site Phosphoserine intermediate is the Ser102. Ser102, Asp241, Asp243, and Asp245 together coordinate Mg(2+). Ser102 is subject to Phosphoserine.

This sequence belongs to the phosphohexose mutase family. It depends on Mg(2+) as a cofactor. Post-translationally, activated by phosphorylation.

It catalyses the reaction alpha-D-glucosamine 1-phosphate = D-glucosamine 6-phosphate. Functionally, catalyzes the conversion of glucosamine-6-phosphate to glucosamine-1-phosphate. The protein is Phosphoglucosamine mutase 1 of Shewanella frigidimarina (strain NCIMB 400).